We begin with the raw amino-acid sequence, 89 residues long: Small ribosomal subunit protein uS15 (89 aa).

The protein belongs to the universal ribosomal protein uS15 family. Part of the 30S ribosomal subunit. Forms a bridge to the 50S subunit in the 70S ribosome, contacting the 23S rRNA.

One of the primary rRNA binding proteins, it binds directly to 16S rRNA where it helps nucleate assembly of the platform of the 30S subunit by binding and bridging several RNA helices of the 16S rRNA. Functionally, forms an intersubunit bridge (bridge B4) with the 23S rRNA of the 50S subunit in the ribosome. The sequence is that of Small ribosomal subunit protein uS15 from Streptococcus mutans serotype c (strain ATCC 700610 / UA159).